Reading from the N-terminus, the 157-residue chain is Cyclic pyranopterin monophosphate synthase (157 aa).

Substrate-binding positions include Met74–His76 and Met112–Glu113. Asp127 is an active-site residue.

The protein belongs to the MoaC family. In terms of assembly, homohexamer; trimer of dimers.

It carries out the reaction (8S)-3',8-cyclo-7,8-dihydroguanosine 5'-triphosphate = cyclic pyranopterin phosphate + diphosphate. It participates in cofactor biosynthesis; molybdopterin biosynthesis. Functionally, catalyzes the conversion of (8S)-3',8-cyclo-7,8-dihydroguanosine 5'-triphosphate to cyclic pyranopterin monophosphate (cPMP). The polypeptide is Cyclic pyranopterin monophosphate synthase (Campylobacter jejuni (strain RM1221)).